The chain runs to 44 residues: Protein PsbN (44 aa).

The helical transmembrane segment at F6–I26 threads the bilayer.

Belongs to the PsbN family.

It localises to the plastid. The protein resides in the chloroplast thylakoid membrane. Its function is as follows. May play a role in photosystem I and II biogenesis. The protein is Protein PsbN of Oedogonium cardiacum (Filamentous green alga).